The sequence spans 320 residues: Sucrose operon repressor (320 aa).

Residues 1 to 55 (MKNIADIAKIAGVSKSTVSRYLNNGSVSLKTQQKLDEIIRENDYQPNQFAQSLRA) form the HTH lacI-type domain. The segment at residues 4 to 23 (IADIAKIAGVSKSTVSRYLN) is a DNA-binding region (H-T-H motif).

In terms of biological role, negative regulator of scrB expression. This is Sucrose operon repressor (scrR) from Staphylococcus xylosus.